The sequence spans 867 residues: Cadherin-related family member 1 (867 aa).

A signal peptide spans Met1–Ala21. Over Asn22 to Lys701 the chain is Extracellular. Cadherin domains follow at residues Asn36–Phe135, Ile136–Phe247, Val248–Phe354, Pro360–Phe473, Thr474–Phe577, and Tyr574–Ala689. 2 N-linked (GlcNAc...) asparagine glycosylation sites follow: Asn58 and Asn89. N-linked (GlcNAc...) asparagine glycans are attached at residues Asn288 and Asn297. A helical membrane pass occupies residues Ala702–Thr722. The Cytoplasmic portion of the chain corresponds to Ala723–Phe867. Positions Lys767–Pro843 are disordered. Over residues Glu777–Ser786 the composition is skewed to polar residues. Over residues Pro790–Ala802 the composition is skewed to pro residues.

In terms of assembly, interacts with PROM1. Undergoes proteolytic cleavage; produces a soluble 95 kDa N-terminal fragment and a 25 kDa cell-associated C-terminal fragment. Expressed in photoreceptor cells of the outer nuclear layer of the retina.

The protein resides in the cell membrane. Its function is as follows. Potential calcium-dependent cell-adhesion protein. May be required for the structural integrity of the outer segment (OS) of photoreceptor cells. In Bos taurus (Bovine), this protein is Cadherin-related family member 1 (CDHR1).